A 769-amino-acid polypeptide reads, in one-letter code: Serine protease HtrA-like (769 aa).

The segment covering methionine 1–glutamate 20 has biased composition (basic residues). Disordered stretches follow at residues methionine 1–asparagine 287 and glutamate 324–alanine 390. 2 stretches are compositionally biased toward basic and acidic residues: residues phenylalanine 21–lysine 64 and leucine 71–lysine 108. Residues tyrosine 126–lysine 137 show a composition bias toward polar residues. Residues serine 138 to serine 186 are compositionally biased toward basic and acidic residues. The segment covering glutamine 247–serine 262 has biased composition (polar residues). Basic and acidic residues predominate over residues glutamine 264–asparagine 287. Residues alanine 331–histidine 347 show a composition bias toward polar residues. Positions arginine 348–asparagine 364 are enriched in basic and acidic residues. Residues glycine 365–alanine 390 are compositionally biased toward polar residues. A helical membrane pass occupies residues leucine 410–valine 430. Active-site charge relay system residues include histidine 504, aspartate 534, and serine 619. A PDZ domain is found at isoleucine 680–aspartate 733.

Belongs to the peptidase S1C family.

Its subcellular location is the cell membrane. This chain is Serine protease HtrA-like, found in Staphylococcus aureus (strain N315).